The following is a 125-amino-acid chain: UPF0734 protein DDB_G0273871/DDB_G0273177 (125 aa).

The protein belongs to the UPF0734 family.

In Dictyostelium discoideum (Social amoeba), this protein is UPF0734 protein DDB_G0273871/DDB_G0273177.